The chain runs to 804 residues: G-type lectin S-receptor-like serine/threonine-protein kinase LECRK4 (804 aa).

An N-terminal signal peptide occupies residues 1–23 (MAPPLFLLSLQLLVLLSSPSAQA). Residues 24–150 (QNISLGTSLT…GGSTISWETF (127 aa)) form the Bulb-type lectin domain. At 24–458 (QNISLGTSLT…DKKLWILGSS (435 aa)) the chain is on the extracellular side. N-linked (GlcNAc...) asparagine glycosylation is found at Asn-25, Asn-58, Asn-216, Asn-227, Asn-238, and Asn-243. In terms of domain architecture, EGF-like; atypical spans 290 to 341 (PENICNAQTKVGSGTCGFNSYCMFDGSNNQTSCVCPEQYSFFDEVRKYRGCR). 5 disulfides stabilise this stretch: Cys-294–Cys-311, Cys-305–Cys-322, Cys-324–Cys-340, Cys-386–Cys-406, and Cys-390–Cys-396. N-linked (GlcNAc...) asparagine glycosylation is present at Asn-318. In terms of domain architecture, PAN spans 349–426 (CDLDEAASMA…IMGSGVQRTV (78 aa)). N-linked (GlcNAc...) asparagine glycosylation is present at Asn-434. The chain crosses the membrane as a helical span at residues 459 to 479 (LLLGGSVIANFALSSVLLFGT). The Cytoplasmic segment spans residues 480 to 804 (YCTITRKDVQ…DSSSVVNSFP (325 aa)). The Protein kinase domain maps to 514–790 (DGFKEVLGTG…TQMLDGADAI (277 aa)). Residues 520–528 (LGTGASGIV) and Lys-544 contribute to the ATP site. The Proton acceptor role is filled by Asp-638.

This sequence belongs to the protein kinase superfamily. Ser/Thr protein kinase family.

It is found in the membrane. The enzyme catalyses L-seryl-[protein] + ATP = O-phospho-L-seryl-[protein] + ADP + H(+). It catalyses the reaction L-threonyl-[protein] + ATP = O-phospho-L-threonyl-[protein] + ADP + H(+). Functionally, does not seem to be involved in resistance against the herbivorous insect brown planthopper (N.lugens, BPH). This Oryza sativa subsp. indica (Rice) protein is G-type lectin S-receptor-like serine/threonine-protein kinase LECRK4.